Reading from the N-terminus, the 83-residue chain is Molybdopterin synthase sulfur carrier subunit (83 aa).

This sequence belongs to the MoaD family.

Its pathway is cofactor biosynthesis; molybdopterin biosynthesis. In terms of biological role, involved in sulfur transfer in the conversion of molybdopterin precursor Z to molybdopterin. Probably plays a role in host phagosome maturation arrest. This is Molybdopterin synthase sulfur carrier subunit (moaD1) from Mycobacterium tuberculosis (strain ATCC 25618 / H37Rv).